A 345-amino-acid chain; its full sequence is tRNA N6-adenosine threonylcarbamoyltransferase (345 aa).

Histidine 115 and histidine 119 together coordinate Fe cation. Substrate contacts are provided by residues 137–141 (LVSGG), aspartate 170, glycine 183, aspartate 187, and asparagine 276. Aspartate 306 contacts Fe cation.

It belongs to the KAE1 / TsaD family. Fe(2+) is required as a cofactor.

The protein resides in the cytoplasm. It catalyses the reaction L-threonylcarbamoyladenylate + adenosine(37) in tRNA = N(6)-L-threonylcarbamoyladenosine(37) in tRNA + AMP + H(+). Its function is as follows. Required for the formation of a threonylcarbamoyl group on adenosine at position 37 (t(6)A37) in tRNAs that read codons beginning with adenine. Is involved in the transfer of the threonylcarbamoyl moiety of threonylcarbamoyl-AMP (TC-AMP) to the N6 group of A37, together with TsaE and TsaB. TsaD likely plays a direct catalytic role in this reaction. In Pediococcus pentosaceus (strain ATCC 25745 / CCUG 21536 / LMG 10740 / 183-1w), this protein is tRNA N6-adenosine threonylcarbamoyltransferase.